The following is a 330-amino-acid chain: Probable WRKY transcription factor 39 (330 aa).

A DNA-binding region (WRKY) is located at residues 256 to 322; it reads KIADIPPDEY…YEGEHNHSRI (67 aa).

The protein localises to the nucleus. Transcription factor. Interacts specifically with the W box (5'-(T)TGAC[CT]-3'), a frequently occurring elicitor-responsive cis-acting element. This is Probable WRKY transcription factor 39 (WRKY39) from Arabidopsis thaliana (Mouse-ear cress).